The following is a 408-amino-acid chain: Probable ethanolamine permease EutH (408 aa).

The next 11 membrane-spanning stretches (helical) occupy residues 1-21, 61-81, 89-109, 126-146, 155-175, 192-212, 230-250, 274-294, 313-333, 342-362, and 369-389; these read MGIN…AAVD, AMVG…PVII, ANPS…FFLA, ILGS…LGII, ALGV…GGLI, FALI…VALG, FLVA…LLGW, IEVI…VLLL, NIAA…FGMM, VINC…LGFA, and MIFP…GVAM.

This sequence belongs to the EutH family.

The protein resides in the cell inner membrane. The enzyme catalyses ethanolamine(in) = ethanolamine(out). The protein operates within amine and polyamine degradation; ethanolamine degradation. Its function is as follows. Probably involved in the diffusion of protonated ethanolamine (EA) into the cell at low pH. At low pH most EA is protonated, and this permease becomes necessary. Contributes to bacterial survival and replication in acidified macrophage vacuoles, but not to bacterial uptake by macrophages. Functionally, expression of the eut operon allows this bacteria to use ethanolamine (EA) as a carbon, nitrogen and energy source. It relies on cobalamin (vitamin B12) both as a cofactor for the ethanolamine ammonia-lyase (EAL) activity and to induce the operon. EA enhances bacterial survival in macrophages in a concentration-dependent manner, suggesting it is an important nutrient during infection. This Salmonella typhimurium (strain LT2 / SGSC1412 / ATCC 700720) protein is Probable ethanolamine permease EutH.